A 109-amino-acid chain; its full sequence is Synaptobrevin-1 (109 aa).

The segment at methionine 1–glutamine 26 is disordered. At methionine 1–lysine 86 the chain is on the cytoplasmic side. A v-SNARE coiled-coil homology domain is found at arginine 23–lysine 83. The chain crosses the membrane as a helical; Anchor for type IV membrane protein span at residues methionine 87–glycine 107. The Extracellular segment spans residues glycine 108–lysine 109.

Belongs to the synaptobrevin family. Part of the SNARE core complex containing ric-4/SNAP25, snb-1/VAMP2 and unc-64/STX1A. This complex binds to cpx-1/CPLX1. Expressed in the nervous system notably the nerve ring, ventral cord and dorsal cord.

The protein localises to the cytoplasmic vesicle. The protein resides in the secretory vesicle. Its subcellular location is the synaptic vesicle membrane. It is found in the cell membrane. It localises to the synapse. The protein localises to the synaptosome. Functionally, involved in the targeting and/or fusion of transport vesicles to their target membrane. Acts in neuronal exocytosis of synaptic transmission. Likely to have a role in cholinergic transmisson. Required for viability, coordinated movement and M3 pharynx motor neuron function. The sequence is that of Synaptobrevin-1 from Caenorhabditis elegans.